Consider the following 65-residue polypeptide: Large ribosomal subunit protein uL29 (65 aa).

The protein belongs to the universal ribosomal protein uL29 family.

This Brevibacillus brevis (strain 47 / JCM 6285 / NBRC 100599) protein is Large ribosomal subunit protein uL29.